Reading from the N-terminus, the 192-residue chain is Putative BTB/POZ domain-containing protein At4g04090 (192 aa).

A BTB domain is found at 23 to 96 (VDVRLMARDS…TYSDGSMLSE (74 aa)).

It participates in protein modification; protein ubiquitination. May act as a substrate-specific adapter of an E3 ubiquitin-protein ligase complex (CUL3-RBX1-BTB) which mediates the ubiquitination and subsequent proteasomal degradation of target proteins. The chain is Putative BTB/POZ domain-containing protein At4g04090 from Arabidopsis thaliana (Mouse-ear cress).